Here is a 323-residue protein sequence, read N- to C-terminus: Probable proline iminopeptidase (323 aa).

The region spanning 37-301 (VVLHGGPGSR…VIVDEAGHDA (265 aa)) is the AB hydrolase-1 domain. S114 serves as the catalytic Nucleophile. D271 is an active-site residue. Catalysis depends on H299, which acts as the Proton donor.

Belongs to the peptidase S33 family.

Its subcellular location is the cytoplasm. The enzyme catalyses Release of N-terminal proline from a peptide.. Its function is as follows. Specifically catalyzes the removal of N-terminal proline residues from peptides. This chain is Probable proline iminopeptidase, found in Streptomyces coelicolor (strain ATCC BAA-471 / A3(2) / M145).